A 424-amino-acid polypeptide reads, in one-letter code: MEKFPAVTVFDLDYQGRGVAKIDGQVVFIEGALPDETVTFCKTSAKKQFIEAVVDEIIEPSPQRVAPRCPFYDRCGGCALQHWHSQEQLLGKQKLWLTQLQRLGGAQPEHVLLPLAGKEWRYRRRARLAVHYENDVIAVGFKAKRSHDVVAVNDCLILQEHLAAALPLLPDFLRALLPVKVDEILLTAGEKVAALTLRTKKRALSPAWGEKWANLAGAHWQLWENDRCLFGEPNDLYYQPISGVTLHFTPDDFIQVNASVNEALIQTVLAWLAPLEKSEVLDLFSGLGNFSLPLAYKGARVTAVEGVRAMVQRGAKMAAEQQLSSRLEMQCMDLFSVSAAQMKSWQSAKSWLLDPPRAGAHAVVQALPKKFPEKIVYVSCNPATLARDVAILQSKGFHLERGQVVNMFAHSAHIESVILMTRTI.

The TRAM domain maps to 1-56 (MEKFPAVTVFDLDYQGRGVAKIDGQVVFIEGALPDETVTFCKTSAKKQFIEAVVDE). C69, C75, C78, and C155 together coordinate [4Fe-4S] cluster. S-adenosyl-L-methionine contacts are provided by Q255, F284, N289, E305, D333, and D354. The active-site Nucleophile is C380.

It belongs to the class I-like SAM-binding methyltransferase superfamily. RNA M5U methyltransferase family. RlmD subfamily.

It carries out the reaction uridine(1939) in 23S rRNA + S-adenosyl-L-methionine = 5-methyluridine(1939) in 23S rRNA + S-adenosyl-L-homocysteine + H(+). In terms of biological role, catalyzes the formation of 5-methyl-uridine at position 1939 (m5U1939) in 23S rRNA. The protein is 23S rRNA (uracil(1939)-C(5))-methyltransferase RlmD of Dichelobacter nodosus (strain VCS1703A).